The sequence spans 1872 residues: Plexin-A3 (1872 aa).

Positions 1 to 19 are cleaved as a signal peptide; it reads MPTVCLLPLLFFTIGGCLG. One can recognise a Sema domain in the interval 20-489; it reads SSRPFRTFVV…SEKQVSQLPV (470 aa). The Extracellular portion of the chain corresponds to 20 to 1220; it reads SSRPFRTFVV…ITADRALTLP (1201 aa). Asn-60 is a glycosylation site (N-linked (GlcNAc...) asparagine). 9 disulfide bridges follow: Cys-78/Cys-87, Cys-113/Cys-121, Cys-267/Cys-388, Cys-283/Cys-339, Cys-357/Cys-376, Cys-492/Cys-509, Cys-498/Cys-540, Cys-501/Cys-518, and Cys-512/Cys-524. Asn-549 carries N-linked (GlcNAc...) asparagine glycosylation. Cysteines 575 and 595 form a disulfide. 4 IPT/TIG domains span residues 841-934, 936-1021, 1024-1123, and 1126-1212; these read PRIT…YSFV, PTFD…YTYT, PTVT…FTYY, and PSFE…LHIT. N-linked (GlcNAc...) asparagine glycosylation is present at Asn-1163. Residues 1221 to 1241 form a helical membrane-spanning segment; sequence AMVGLAAGGGLLLLAITVVLV. The stretch at 1240 to 1294 forms a coiled coil; sequence LVAYKRKTQDADRTLKRLQLQMDNLESRVALECKEAFAELQTDINELTNHMDGVQ. Residues 1242 to 1872 are Cytoplasmic-facing; it reads AYKRKTQDAD…QIITLVSSSS (631 aa). A Phosphoserine modification is found at Ser-1597.

This sequence belongs to the plexin family. Detected in embryonic hindbrain, spinal cord, dorsal root ganglion, trigeminal ganglion and superior cervical ganglion. In newborns, detected throughout all layers of the hippocampus.

It localises to the cell membrane. Coreceptor for SEMA3A and SEMA3F. Necessary for signaling by class 3 semaphorins and subsequent remodeling of the cytoskeleton. Plays a role in axon guidance in the developing nervous system. Regulates the migration of sympathetic neurons, but not of neural crest precursors. Required for normal dendrite spine morphology in pyramidal neurons. May play a role in regulating semaphorin-mediated programmed cell death in the developing nervous system. Class 3 semaphorins bind to a complex composed of a neuropilin and a plexin. The plexin modulates the affinity of the complex for specific semaphorins, and its cytoplasmic domain is required for the activation of down-stream signaling events in the cytoplasm. This Mus musculus (Mouse) protein is Plexin-A3 (Plxna3).